The primary structure comprises 124 residues: Iron-sulfur cluster insertion protein ErpA (124 aa).

Iron-sulfur cluster is bound by residues Cys52, Cys116, and Cys118.

Belongs to the HesB/IscA family. As to quaternary structure, homodimer. The cofactor is iron-sulfur cluster.

In terms of biological role, required for insertion of 4Fe-4S clusters for at least IspG. This chain is Iron-sulfur cluster insertion protein ErpA, found in Acidithiobacillus ferrooxidans (strain ATCC 23270 / DSM 14882 / CIP 104768 / NCIMB 8455) (Ferrobacillus ferrooxidans (strain ATCC 23270)).